Here is a 287-residue protein sequence, read N- to C-terminus: ATP synthase gamma chain (287 aa).

It belongs to the ATPase gamma chain family. In terms of assembly, F-type ATPases have 2 components, CF(1) - the catalytic core - and CF(0) - the membrane proton channel. CF(1) has five subunits: alpha(3), beta(3), gamma(1), delta(1), epsilon(1). CF(0) has three main subunits: a, b and c.

It is found in the cell inner membrane. Produces ATP from ADP in the presence of a proton gradient across the membrane. The gamma chain is believed to be important in regulating ATPase activity and the flow of protons through the CF(0) complex. This chain is ATP synthase gamma chain, found in Enterobacter sp. (strain 638).